Reading from the N-terminus, the 144-residue chain is MAKKIIGYIKLQIPAGKANPSPPVGPALGQRGLNIMEFCKAFNAATQGMESGLPIPVVITAFADKSFTFVMKTPPASILLKKAAGLQKGSSNPLTNKVGKLTRAQLEEIAKTKEPDLTAADLDAAVRTIAGSARSMGLDVEGVV.

It belongs to the universal ribosomal protein uL11 family. In terms of assembly, part of the ribosomal stalk of the 50S ribosomal subunit. Interacts with L10 and the large rRNA to form the base of the stalk. L10 forms an elongated spine to which L12 dimers bind in a sequential fashion forming a multimeric L10(L12)X complex. One or more lysine residues are methylated.

Functionally, forms part of the ribosomal stalk which helps the ribosome interact with GTP-bound translation factors. The protein is Large ribosomal subunit protein uL11 of Neisseria gonorrhoeae (strain ATCC 700825 / FA 1090).